We begin with the raw amino-acid sequence, 648 residues long: Biosynthetic arginine decarboxylase (648 aa).

Lys-109 carries the post-translational modification N6-(pyridoxal phosphate)lysine. 291 to 301 (IDVGGGLGIDF) is a binding site for substrate.

It belongs to the Orn/Lys/Arg decarboxylase class-II family. SpeA subfamily. Mg(2+) serves as cofactor. The cofactor is pyridoxal 5'-phosphate.

The catalysed reaction is L-arginine + H(+) = agmatine + CO2. Its pathway is amine and polyamine biosynthesis; agmatine biosynthesis; agmatine from L-arginine: step 1/1. In terms of biological role, catalyzes the biosynthesis of agmatine from arginine. In Prochlorococcus marinus (strain MIT 9301), this protein is Biosynthetic arginine decarboxylase.